A 354-amino-acid polypeptide reads, in one-letter code: GDSL esterase/lipase At3g09930 (354 aa).

Positions 1 to 24 (MELPKLLISLFLFSFSSFFLGAES) are cleaved as a signal peptide. The active-site Nucleophile is S46. Residues N133, N233, N237, N256, and N300 are each glycosylated (N-linked (GlcNAc...) asparagine). Catalysis depends on residues D329 and H332.

Belongs to the 'GDSL' lipolytic enzyme family.

It localises to the secreted. The protein is GDSL esterase/lipase At3g09930 of Arabidopsis thaliana (Mouse-ear cress).